The sequence spans 159 residues: Eukaryotic translation initiation factor 5A-2 (159 aa).

Positions 1 to 10 are enriched in basic and acidic residues; it reads MSDDEHHFEA. A disordered region spans residues 1–25; sequence MSDDEHHFEASESGASKTYPQSAGN. Serine 2 carries the post-translational modification Phosphoserine. A compositionally biased stretch (polar residues) spans 13-24; the sequence is SGASKTYPQSAG. Position 51 is a hypusine (lysine 51).

Belongs to the eIF-5A family. As to quaternary structure, homodimer. Interacts with AHK4 and AHP1. Cytokinin regulates the formation of the AHP1-AHK4-ELF5A-2 complex. In terms of processing, lys-51 undergoes hypusination, a unique post-translational modification that consists in the addition of a butylamino group from spermidine to lysine side chain, leading to the formation of the unusual amino acid hypusine. eIF-5As are the only known proteins to undergo this modification, which is essential for their function. Ubiquitous. In roots, expressed mostly inside the stele of the mature zone.

It localises to the cytoplasm. Its subcellular location is the nucleus. In terms of biological role, translation factor that promotes translation elongation and termination, particularly upon ribosome stalling at specific amino acid sequence contexts. Binds between the exit (E) and peptidyl (P) site of the ribosome and promotes rescue of stalled ribosome: specifically required for efficient translation of polyproline-containing peptides as well as other motifs that stall the ribosome. Acts as a ribosome quality control (RQC) cofactor by joining the RQC complex to facilitate peptidyl transfer during CAT tailing step. Regulates cytokinin-mediated root protoxylem specification and represses secifically the expression of AHP6. Regulates the induction of programmed cell death caused by infection with virulent pathogen. This chain is Eukaryotic translation initiation factor 5A-2 (ELF5A-2), found in Arabidopsis thaliana (Mouse-ear cress).